A 75-amino-acid chain; its full sequence is Alpha-elapitoxin-Bc2b (75 aa).

Residues 1 to 2 form the signal peptide; sequence YT. 5 cysteine pairs are disulfide-bonded: Cys5–Cys24, Cys17–Cys45, Cys30–Cys34, Cys49–Cys60, and Cys61–Cys66.

In terms of assembly, monomer in solution, homodimer in crystal state. As to expression, expressed by the venom gland.

The protein resides in the secreted. In terms of biological role, binds to muscular and neuronal nicotinic acetylcholine receptor (nAChR) and inhibits acetylcholine from binding to the receptor, thereby impairing neuromuscular and neuronal transmission. Blocks muscle type nAChR. Also binds with high affinity to alpha-7/CHRNA7 nAChRs. In addition, shows a weak inhibition of neuronal alpha-3-beta-2/CHRNA3-CHRNB2 nAChR. Selectively binds to alpha-1-delta subunit interface of the mouse muscle nicotinic acetylcholine receptor, with a 10-fold higher affinity for the adult than for the fetal receptors. In vivo, when intraperitoneally injected into mice, causes flaccid paralysis and respiratory distress, followed by death within 2-4 hours. The polypeptide is Alpha-elapitoxin-Bc2b (Bungarus candidus (Malayan krait)).